The primary structure comprises 668 residues: Protein PLASTID TRANSCRIPTIONALLY ACTIVE 10 (668 aa).

Residues 1–40 (MQICQTKLNFTFPNPTNPNFCKPKALQWSPPRRISLLPCR) constitute a chloroplast transit peptide. The S1 motif domain maps to 272–340 (GMVCEGTVTT…YRFRFPLELR (69 aa)). Basic and acidic residues predominate over residues 362 to 391 (RDGDTNPDEIRRDCGRPPEPRKDPGSKPEE). The tract at residues 362–394 (RDGDTNPDEIRRDCGRPPEPRKDPGSKPEEEGL) is disordered. Residue Ser-434 is modified to Phosphoserine. Residues 611–668 (KRKEGSTLASQEEETESEEEEEDDDDFDDFDYSILSDESSIGYSEQQPLVNGTQVLTD) are disordered. Residues 621–641 (QEEETESEEEEEDDDDFDDFD) are compositionally biased toward acidic residues. Positions 646 to 668 (SDESSIGYSEQQPLVNGTQVLTD) are enriched in polar residues.

In terms of assembly, component of the transcriptionally active chromosome (TAC) complexes. Interacts with PTAC7.

The protein localises to the plastid. It is found in the chloroplast. This Arabidopsis thaliana (Mouse-ear cress) protein is Protein PLASTID TRANSCRIPTIONALLY ACTIVE 10.